A 105-amino-acid chain; its full sequence is uncharacterized protein (105 aa).

Residues 41-62 (GIITKIAASPFVIVLYFNTAFF) form a helical membrane-spanning segment.

It localises to the membrane. This is an uncharacterized protein from Saccharomyces cerevisiae (strain ATCC 204508 / S288c) (Baker's yeast).